The chain runs to 857 residues: Autoinducer 2 sensor kinase/phosphatase LuxQ (857 aa).

2 consecutive transmembrane segments (helical) span residues 20–40 (IIFLVLGLITIGIFIQSYYFS) and 283–303 (LGLATSVVLMLMLSLAIRSWI). A Histidine kinase domain is found at 490 to 712 (KMSHEIRTPL…TFYLSIPVEK (223 aa)). A Phosphohistidine; by autocatalysis modification is found at His-493. In terms of domain architecture, Response regulatory spans 735 to 850 (KVLLVEDNHT…ELHDELLHFK (116 aa)). Asp-784 bears the 4-aspartylphosphate mark.

As to quaternary structure, binds the complex formed by the autoinducer and LuxP.

It is found in the cell inner membrane. The enzyme catalyses ATP + protein L-histidine = ADP + protein N-phospho-L-histidine.. Functionally, at low cell density, in absence of autoinducer has a kinase activity, and autophosphorylates on a histidine residue. The phosphoryl group is then transferred to an aspartate residue in the response regulator domain. The phosphoryl group is transferred to LuxU, and ultimately to LuxO. At high cell density, in the presence of autoinducer, the kinase activity is inactivated, and the response regulator domain has a phosphatase activity. This Vibrio vulnificus (strain CMCP6) protein is Autoinducer 2 sensor kinase/phosphatase LuxQ (luxQ).